Reading from the N-terminus, the 269-residue chain is MRIDVVSIFPEYLAPLELSLIGKARQDGILDLHVHDLRSFTTDRHRTVDDTPYGGGAGMVMKPEPWSQALTAVAEARRGHQGKPVLIVPSPAGERFTQALAHELAGEEHLAFACGRYEGIDERVIEWAGEHFDVRPVSLGDYVLNGGEVAVLAMVEAVGRLLPGVVGNPESLVEESHSDGLLEYPVYTKPAVWRDREVPAILLSGNHGKIAQWRRHEQFRRTSERRPDLLEVFDAGKLPKADRLALQELGYDIVDGRPVRRQGTAEPAG.

S-adenosyl-L-methionine contacts are provided by residues Gly115 and 139–144; that span reads LGDYVL.

This sequence belongs to the RNA methyltransferase TrmD family. In terms of assembly, homodimer.

It localises to the cytoplasm. The enzyme catalyses guanosine(37) in tRNA + S-adenosyl-L-methionine = N(1)-methylguanosine(37) in tRNA + S-adenosyl-L-homocysteine + H(+). Specifically methylates guanosine-37 in various tRNAs. This Pseudarthrobacter chlorophenolicus (strain ATCC 700700 / DSM 12829 / CIP 107037 / JCM 12360 / KCTC 9906 / NCIMB 13794 / A6) (Arthrobacter chlorophenolicus) protein is tRNA (guanine-N(1)-)-methyltransferase.